Here is a 146-residue protein sequence, read N- to C-terminus: Ribonuclease H (146 aa).

The region spanning 1 to 143 is the RNase H type-1 domain; sequence MKEIIIYTDG…CDQLARNAIK (143 aa). Residues D9, E47, D70, and D135 each coordinate Mg(2+).

It belongs to the RNase H family. In terms of assembly, monomer. Mg(2+) is required as a cofactor.

It is found in the cytoplasm. The enzyme catalyses Endonucleolytic cleavage to 5'-phosphomonoester.. Its function is as follows. Endonuclease that specifically degrades the RNA of RNA-DNA hybrids. This is Ribonuclease H from Syntrophomonas wolfei subsp. wolfei (strain DSM 2245B / Goettingen).